The primary structure comprises 83 residues: MKTLLLTLVVVTIVCLDLGYTLKCHNTQLPFIYKTCPEGKNLCFKATLKKFPLKFPVKRGCADNCPKNSALLKYVCCSTDKCN.

Residues 1–21 (MKTLLLTLVVVTIVCLDLGYT) form the signal peptide. 4 disulfide bridges follow: cysteine 24-cysteine 43, cysteine 36-cysteine 61, cysteine 65-cysteine 76, and cysteine 77-cysteine 82.

This sequence belongs to the three-finger toxin family. Short-chain subfamily. Orphan group XV sub-subfamily. In terms of tissue distribution, expressed by the venom gland.

The protein resides in the secreted. The protein localises to the target cell membrane. Has low cytotoxic activity. This Naja atra (Chinese cobra) protein is Cardiotoxin 7''.